A 673-amino-acid polypeptide reads, in one-letter code: Kinesin-like protein KIFC1 (673 aa).

Residues Ser6, Ser26, Ser31, and Ser33 each carry the phosphoserine modification. Disordered regions lie at residues 23-94 and 109-136; these read KAPS…TGPR and VPAV…KRPA. Residues 60–86 show a composition bias toward polar residues; it reads TKITTSHPRVPSLTTVPQTQGQTTAQK. Positions 142–306 form a coiled coil; that stretch reads QLCDLNAELK…RRRLHNQLQE (165 aa). A Kinesin motor domain is found at 310–663; the sequence is NIRVFCRVRP…LRFASKVNQC (354 aa). Residues 325 to 372 are disordered; it reads PTPPPGLLLFPSGPGGPSDPPTRLSLSRSDERRGTLSGAPAPPTRHDF. A Phosphothreonine modification is found at Thr359. Position 410 to 417 (410 to 417) interacts with ATP; sequence GQTGSGKT.

The protein belongs to the TRAFAC class myosin-kinesin ATPase superfamily. Kinesin family. NCD subfamily. As to quaternary structure, binds NUBP1 and NUBP2. Interacts with PPP1R42.

The protein localises to the nucleus. Its subcellular location is the cytoplasm. It localises to the cytoskeleton. It is found in the microtubule organizing center. The protein resides in the centrosome. The protein localises to the spindle. Its subcellular location is the early endosome. In terms of biological role, minus end-directed microtubule-dependent motor required for bipolar spindle formation. May contribute to movement of early endocytic vesicles. Regulates cilium formation and structure. This Homo sapiens (Human) protein is Kinesin-like protein KIFC1 (KIFC1).